Reading from the N-terminus, the 639-residue chain is CD2-associated protein (639 aa).

Positions M1–R59 constitute an SH3 1; truncated domain. The interval M1–E175 is interaction with ANLN and localization to the midbody. K58 participates in a covalent cross-link: Glycyl lysine isopeptide (Lys-Gly) (interchain with G-Cter in SUMO2). Phosphoserine is present on residues S67, S80, and S86. An SH3 2 domain is found at T108–V167. Over residues T168–Q177 the composition is skewed to basic and acidic residues. The tract at residues T168–K209 is disordered. Residues G195–Q207 are compositionally biased toward polar residues. S224 carries the post-translational modification Phosphoserine. The tract at residues L227–S256 is disordered. An SH3 3 domain is found at K269–E330. The interval K333–G428 is disordered. 3 short sequence motifs (SH3-binding) span residues P336–P352, K378–K397, and P410–P422. Over residues P341 to K351 the composition is skewed to pro residues. Residues A356–P379 are compositionally biased toward basic and acidic residues. Residues P385 to P395 are compositionally biased toward pro residues. S458, S463, S469, S510, and S514 each carry phosphoserine. K523 participates in a covalent cross-link: Glycyl lysine isopeptide (Lys-Gly) (interchain with G-Cter in SUMO2). T565 carries the phosphothreonine modification. Residues D577–S638 adopt a coiled-coil conformation. S582 is subject to Phosphoserine.

As to quaternary structure, homodimer. Interacts with F-actin, PKD2, NPHS1 and NPHS2. Interacts with WTIP. Interacts with DDN; interaction is direct. Interacts (via SH3 2 domain) with CBL (via phosphorylated C-terminus). Interacts with BCAR1/p130Cas (via SH3 domain). Interacts with MVB12A and ARHGAP17. Interacts with ANLN, CD2 and CBLB. Interacts with PDCD6IP and TSG101. Interacts with RIN3. Interacts directly with RET (inactive) and CBLC; upon RET activation by GDNF suggested to dissociate from RET as CBLC:CD2AP complex. Interacts with CGNL1 and SH3BP1; probably part of a complex at cell junctions. Interacts with CAPZA1. (Microbial infection) Interacts (via SH3 domains) with Chikungunya virus non-structural protein 3 (via C-terminus); this interaction plays a role in initiation of viral replication. In terms of processing, phosphorylated on tyrosine residues; probably by c-Abl, Fyn and c-Src. As to expression, widely expressed in fetal and adult tissues.

The protein localises to the cytoplasm. The protein resides in the cytoskeleton. Its subcellular location is the cell projection. It localises to the ruffle. It is found in the cell junction. Seems to act as an adapter protein between membrane proteins and the actin cytoskeleton. In collaboration with CBLC, modulates the rate of RET turnover and may act as regulatory checkpoint that limits the potency of GDNF on neuronal survival. Controls CBLC function, converting it from an inhibitor to a promoter of RET degradation. May play a role in receptor clustering and cytoskeletal polarity in the junction between T-cell and antigen-presenting cell. May anchor the podocyte slit diaphragm to the actin cytoskeleton in renal glomerolus. Also required for cytokinesis. Plays a role in epithelial cell junctions formation. The sequence is that of CD2-associated protein (CD2AP) from Homo sapiens (Human).